A 410-amino-acid chain; its full sequence is Peptidase T (410 aa).

The interval 11–30 is disordered; it reads RYAEIDTQSDPDSESTPSTE. Position 78 (His-78) interacts with Zn(2+). Asp-80 is an active-site residue. Asp-140 is a binding site for Zn(2+). The Proton acceptor role is filled by Glu-174. The Zn(2+) site is built by Glu-175, Asp-197, and His-379.

The protein belongs to the peptidase M20B family. The cofactor is Zn(2+).

Its subcellular location is the cytoplasm. The catalysed reaction is Release of the N-terminal residue from a tripeptide.. In terms of biological role, cleaves the N-terminal amino acid of tripeptides. In Staphylococcus carnosus (strain TM300), this protein is Peptidase T.